The primary structure comprises 278 residues: 4-hydroxy-tetrahydrodipicolinate reductase (278 aa).

Residues 13 to 18 (GAAGKM) and 111 to 113 (GTT) contribute to the NAD(+) site. The active-site Proton donor/acceptor is the His-167. A (S)-2,3,4,5-tetrahydrodipicolinate-binding site is contributed by His-168. The active-site Proton donor is the Lys-171. 177 to 178 (GT) is a binding site for (S)-2,3,4,5-tetrahydrodipicolinate.

It belongs to the DapB family.

The protein resides in the cytoplasm. It catalyses the reaction (S)-2,3,4,5-tetrahydrodipicolinate + NAD(+) + H2O = (2S,4S)-4-hydroxy-2,3,4,5-tetrahydrodipicolinate + NADH + H(+). The catalysed reaction is (S)-2,3,4,5-tetrahydrodipicolinate + NADP(+) + H2O = (2S,4S)-4-hydroxy-2,3,4,5-tetrahydrodipicolinate + NADPH + H(+). Its pathway is amino-acid biosynthesis; L-lysine biosynthesis via DAP pathway; (S)-tetrahydrodipicolinate from L-aspartate: step 4/4. In terms of biological role, catalyzes the conversion of 4-hydroxy-tetrahydrodipicolinate (HTPA) to tetrahydrodipicolinate. This is 4-hydroxy-tetrahydrodipicolinate reductase from Nostoc sp. (strain PCC 7120 / SAG 25.82 / UTEX 2576).